A 367-amino-acid polypeptide reads, in one-letter code: Protein SUPPRESSOR OF FRI 4 (367 aa).

The BED-type zinc finger occupies 7 to 66 (RATEKVWCYYCDREFDDEKILVQHQKAKHFKCHVCHKKLSTASGMVIHVLQVHKENVTKV). Residues C38, C41, H54, and H59 each coordinate Zn(2+). Positions 246–309 (PFSAPLPVGG…PPVIANKAPS (64 aa)) are disordered. The segment covering 273–295 (PNNSIPGGTNAHSYASGPNTSGP) has biased composition (polar residues).

As to quaternary structure, homodimer. Component of the transcription activator complex FRI-C composed of FRI, FRL1, SUF4, FLX and FES1. Interacts with LD, ASHH2, FRL1, (via C-terminus) with FRI (via C-terminus), and with SWC6, a component of the SWR1 chromatin-remodeling complex. Binds to MED18 to regulate flowering time; recruits MED18 to FLC promoter. In terms of tissue distribution, expressed in root, shoot apex, leaves, stem and flowers. Expressed in expanding leaves, in the vasculature of fully expanded leaves, in the inflorescence, throughout young floral primordia, in the carpels of older flowers and in fertilized ovules.

The protein localises to the nucleus. Functionally, sequence-specific DNA binding factor that recognizes the 5'-CCAAATTTTAAGTTT-3' sequence. Recruits the FRI-C complex to the FLC promoter. Required for FRI-mediated FLC activation, but has no effect on the expression of MAF1, MAF2, MAF3, MAF5, UFC and CO. Dispensable for the reactivation of FLC in early embryogenesis, but required to maintain high levels of FLC expression in later embryonic and vegetative development. This chain is Protein SUPPRESSOR OF FRI 4, found in Arabidopsis thaliana (Mouse-ear cress).